Here is a 178-residue protein sequence, read N- to C-terminus: Large ribosomal subunit protein uL6 (178 aa).

The protein belongs to the universal ribosomal protein uL6 family. Part of the 50S ribosomal subunit.

This protein binds to the 23S rRNA, and is important in its secondary structure. It is located near the subunit interface in the base of the L7/L12 stalk, and near the tRNA binding site of the peptidyltransferase center. The polypeptide is Large ribosomal subunit protein uL6 (Gluconobacter oxydans (strain 621H) (Gluconobacter suboxydans)).